An 846-amino-acid polypeptide reads, in one-letter code: Protein kintoun (846 aa).

Disordered regions lie at residues 216 to 240 (TAEEQEPHPLAHMFPTKPPAPGKPE), 372 to 405 (LRHFSREDSGVELHSNSESPVEEDPDGELSDSKA), 574 to 631 (QALK…ESAC), and 762 to 846 (KKNQ…EMDD). Over residues 372–382 (LRHFSREDSGV) the composition is skewed to basic and acidic residues. The residue at position 380 (serine 380) is a Phosphoserine. Acidic residues predominate over residues 391–400 (PVEEDPDGEL). Positions 583–603 (GTKEEEEKGNQDQEPESDKQH) are enriched in basic and acidic residues. 2 stretches are compositionally biased toward basic residues: residues 611–622 (KAGKKQRKRNKK) and 762–776 (KKNQKRRDLKLRAQQ). Serine 780 bears the Phosphoserine mark. A compositionally biased stretch (polar residues) spans 795–809 (LKQQENQSRNCNKPN).

This sequence belongs to the PIH1 family. Kintoun subfamily. In terms of assembly, interacts with Pp1alpha-96A, Pp1-87B, Pp1-13C and flw.

Its subcellular location is the cytoplasm. Its function is as follows. Required for cytoplasmic pre-assembly of axonemal dyneins, thereby playing a central role in motility in cilia and flagella. Involved in pre-assembly of dynein arm complexes in the cytoplasm before intraflagellar transport loads them for the ciliary compartment. This Drosophila yakuba (Fruit fly) protein is Protein kintoun.